A 439-amino-acid polypeptide reads, in one-letter code: MRLSRYFMPTLREAPSDAQIVSHQLMLRAGMIRQEAAGIYAWLPLGLKVLKKIEQVVREEMDRAGAIEVLMPTLQLADLWRESGRYDDYGEEMLRIKDRHERDLLYGPTAEEVITDIFRAYIKSYKDLPKNLYNIQWKFRDERRPRFGVMRGREFLMKDAYSFDIDEAAARRAYNRMFCAYLNVYARLGLKAIPVRADTGPIGGDLSHEFIILADTGESQVFAHRDLVEMGAPGPDIDWDGDLEPLVQQRTRLYAASDEMHDQARFETEAPEDKRMTARGIEVGHIFYFGEKYSRPMNAKVAGPDGAERFVHMGSYGVGVSRLVGAIIEASHDEAGIVWPDSVAPFGAAVVNLRPGEAAVDAVAEQAYGALQAAGKEPLLDDRDERPGAKFASLDLVGVPWQLIVGPKGVAEGVVEIKRRATGERQTLPLDAALKAITA.

It belongs to the class-II aminoacyl-tRNA synthetase family. ProS type 2 subfamily. Homodimer.

The protein localises to the cytoplasm. The catalysed reaction is tRNA(Pro) + L-proline + ATP = L-prolyl-tRNA(Pro) + AMP + diphosphate. Its function is as follows. Catalyzes the attachment of proline to tRNA(Pro) in a two-step reaction: proline is first activated by ATP to form Pro-AMP and then transferred to the acceptor end of tRNA(Pro). The polypeptide is Proline--tRNA ligase (Phenylobacterium zucineum (strain HLK1)).